The chain runs to 829 residues: Telomere length regulation protein TEL2 homolog (829 aa).

Disordered regions lie at residues 446–493 (SADF…DDLV) and 620–641 (SEKP…PHSI). Residues 456–466 (SSPSKSPLSSP) are compositionally biased toward low complexity. Positions 467 to 480 (EVREKSKVKVKADQ) are enriched in basic and acidic residues. Residues 482-493 (SDSDLDSDDDLV) show a composition bias toward acidic residues. Over residues 629–641 (AESGSVNTDPHSI) the composition is skewed to polar residues.

It belongs to the TEL2 family.

It is found in the cytoplasm. The protein localises to the membrane. The protein resides in the nucleus. It localises to the chromosome. Its subcellular location is the telomere. Functionally, regulator of the DNA damage response (DDR). Part of the TTT complex that is required to stabilize protein levels of the phosphatidylinositol 3-kinase-related protein kinase (PIKK) family proteins. Promotes assembly, stabilizes and maintains the activity of TORC complexes, which regulate cell growth and survival in response to nutrient and hormonal signals. May be involved in telomere length regulation. This is Telomere length regulation protein TEL2 homolog (telo2) from Xenopus tropicalis (Western clawed frog).